The primary structure comprises 529 residues: MASEIYRRLPMELPAQHLLASLALVGALLSVGYLLLRPAKYQLPLPPGPRGLPIIGNLHQAPKEKAWEVYKQWSDRYGPIMSVNNGGMITIIVSSHEVVKNFLEKNNAVFSSRPQLLVLERALYGFTTPALPYGEKWLKHRALRGAVLKPAMAVRYRGLQDLESKQLLRDLLYSEDFTQCMRRQAASLFLGIAYGNRFPEETPEIIDIDQAVAQLGGISESMFQGTGMLREFFPVLKYFPGYDKFLKQLDDVGERLANIYVRRFRDGLSTPAWNWAKEYSKRPEAQGMGELELSFCIGSTYQASLTPYEILRIILLAAICHPEEKARLQKEIDLVVGKDNLPGWEHKDRIQFVQAFIYEALRWHAFSPLGAPRAVSRDIEYKGYFIPKGATLVLNQWAMDHDENVYDNPFTFRPQRWIDNPDLPHVIFGFGLRGCPGQHLARDHLFINTARLFWAFNFGNAYENGKKVELDLDELMQPRGGGSAFNQVPSFKASVIIRSSERRQIVENEWDAVEKDEQKILAEAMPLPE.

Residues 13 to 35 traverse the membrane as a helical segment; sequence LPAQHLLASLALVGALLSVGYLL. Residue C435 coordinates heme.

The protein belongs to the cytochrome P450 family. Requires heme as cofactor.

The protein resides in the membrane. It carries out the reaction okaramine C + 2 reduced [NADPH--hemoprotein reductase] + 2 O2 = okaramine A + 2 oxidized [NADPH--hemoprotein reductase] + 4 H2O + 2 H(+). It participates in alkaloid biosynthesis. Functionally, cytochrome P450 monooxygenase; part of the gene cluster that mediates the biosynthesis of okaramine B, a prenylated indole alkaloid that possesses an unusual octacyclic ring system, including a four-membered azetidine ring and an eight-membered azocine ring, and that exhibits insecticidal activity against silkworm larvae. Within the pathway, okaD likely catalyzes a key step in forming the eight-membered ring of okaramine A using as substrate okaramine C. The biosynthesis begins with the NRPS okaA that condenses two tryptophan molecules into cyclo(L-Trp-L-Trp). Prenylation by the prenyltransferase okaC then leads to the formation of cyclo(N8-(alpha,alpha-dimethylallyl)-L-Trp-6a-(alpha,alpha-dime-thylallyl)-L-Trp). This is followed by indole 2,3-epoxidation by the FAD-dependent monooxygenase okaB to facilitate the formation of the hexahydropyrrolo[2,3-b]indole (HPI) moiety of okaramine C. The cytochrome P450 monooxygenase okaD then likely catalyzes formation of the eight-membered ring of okaramine A. The dioxygenase okaE further forms the unusual 2-dimethyl-3-methyl-azetidine ring to yield 12-deshydroxyl okaramine E, as well as the hydroxylation of 12-deshydroxyl okaramine E to produce okaramine E. The cytochrome P450 monoxygenase okaG converts 12-deshydroxyl okaramine E into 3-desmethyl okaramine B which is further methylated by the methyltransferase okaF into okaramine B. In a shunt pathway, okaG and okaF together are also able to convert okaramine E into okaramine D. Okaramine H is produced by nonenzymatic conversion from okaramine A. The sequence is that of Cytochrome P450 monooxygenase okaD from Penicillium ochrochloron.